A 486-amino-acid chain; its full sequence is Flavin-dependent monooxygenase pboD (486 aa).

The FAD site is built by Asp51, Gly65, and Arg124. Arg203 is an active-site residue. FAD-binding residues include Asp344 and Gly357.

The protein belongs to the paxM FAD-dependent monooxygenase family. FAD serves as cofactor.

Its pathway is secondary metabolite biosynthesis. Functionally, flavin-dependent monooxygenase; part of the gene cluster that mediates the biosynthesis of protubonine B, a hydroxylated and diacetylated cyclo-L-Trp-L-Leu derivative. Within the pathway, pboD catalyzes the hydroxylation at C-3 of the indole ring of cyclo-L-Trp-L-Leu and subsequent formation of the pyrrolidine ring, eading to the production of protubonine D. PboD is also able to accept other cyclodipeptides (CDPs) as substrates, including cyclo-L-Trp-L-Trp, cyclo-L-Trp-L-Tyr, cyclo-L-Trp-L-Phe, cyclo-L-Trp-L-Met, cyclo-L-Trp-L-Ala, cyclo-L-Trp-L-Pro and cyclo-L-Trp-Gly. Assays with cyclo-L-Trp-L-Trp, cyclo-L-Trp-L-Tyr, cyclo-L-Trp-L-Phe show similar or even slightly higher conversion yields, compared with that of the natural substrate cyclo-L-Trp-L-Leu, whereas cyclo-L-Trp-L-Pro and cyclo-L-Trp-Gly are accepted by PboD but only with conversion yields of 10 and 4%, respectively. Cyclo-L-Trp-L-His is not accepted as a substrate. The first step of the protubonine B synthesis is performed by the nonribosomal peptide synthetase pboA that catalyzes the formation of cyclo-L-Trp-L-Leu by condensing L-Leu with L-Trp. The flavin-dependent monooxygenase pboD is responsible for hydroxylation at C-3 of the indole ring and subsequent formation of the pyrrolidine ring, leadind to protubonine D. Protubonine D is further diacetylated by two acetyltransferases, pboB and pboC, to form the final product protubonine B via protubonine C. The sequence is that of Flavin-dependent monooxygenase pboD from Aspergillus ustus.